A 117-amino-acid chain; its full sequence is Large ribosomal subunit protein uL18 (117 aa).

This sequence belongs to the universal ribosomal protein uL18 family. As to quaternary structure, part of the 50S ribosomal subunit; part of the 5S rRNA/L5/L18/L25 subcomplex. Contacts the 5S and 23S rRNAs.

In terms of biological role, this is one of the proteins that bind and probably mediate the attachment of the 5S RNA into the large ribosomal subunit, where it forms part of the central protuberance. This Azoarcus sp. (strain BH72) protein is Large ribosomal subunit protein uL18.